We begin with the raw amino-acid sequence, 494 residues long: Guanosine-5'-triphosphate,3'-diphosphate pyrophosphatase (494 aa).

The protein belongs to the GppA/Ppx family. GppA subfamily.

The enzyme catalyses guanosine 3'-diphosphate 5'-triphosphate + H2O = guanosine 3',5'-bis(diphosphate) + phosphate + H(+). The protein operates within purine metabolism; ppGpp biosynthesis; ppGpp from GTP: step 2/2. Catalyzes the conversion of pppGpp to ppGpp. Guanosine pentaphosphate (pppGpp) is a cytoplasmic signaling molecule which together with ppGpp controls the 'stringent response', an adaptive process that allows bacteria to respond to amino acid starvation, resulting in the coordinated regulation of numerous cellular activities. This is Guanosine-5'-triphosphate,3'-diphosphate pyrophosphatase from Escherichia fergusonii (strain ATCC 35469 / DSM 13698 / CCUG 18766 / IAM 14443 / JCM 21226 / LMG 7866 / NBRC 102419 / NCTC 12128 / CDC 0568-73).